A 137-amino-acid chain; its full sequence is NADH dehydrogenase [ubiquinone] 1 beta subcomplex subunit 7 (137 aa).

The N-myristoyl glycine moiety is linked to residue glycine 2. The 43-residue stretch at 56 to 98 folds into the CHCH domain; that stretch reads RDYCAHHLIRLLKCKRDSFPNFLACKQERHDWDYCEHRDYVMR. The Cx9C motif 1 motif lies at 59-69; the sequence is CAHHLIRLLKC. Cystine bridges form between cysteine 59–cysteine 90 and cysteine 69–cysteine 80. A Phosphoserine modification is found at serine 73. The short motif at 80–90 is the Cx9C motif 2 element; the sequence is CKQERHDWDYC. The disordered stretch occupies residues 113 to 137; it reads KRREKKAAELAKGQGPGEVDPKVAL.

It belongs to the complex I NDUFB7 subunit family. In terms of assembly, complex I is composed of 45 different subunits.

The protein resides in the mitochondrion inner membrane. The protein localises to the mitochondrion intermembrane space. Its function is as follows. Accessory subunit of the mitochondrial membrane respiratory chain NADH dehydrogenase (Complex I), that is believed not to be involved in catalysis. Complex I functions in the transfer of electrons from NADH to the respiratory chain. The immediate electron acceptor for the enzyme is believed to be ubiquinone. The polypeptide is NADH dehydrogenase [ubiquinone] 1 beta subcomplex subunit 7 (NDUFB7) (Homo sapiens (Human)).